A 310-amino-acid polypeptide reads, in one-letter code: Aspartate carbamoyltransferase catalytic subunit (310 aa).

Residues R58 and T59 each coordinate carbamoyl phosphate. K86 is an L-aspartate binding site. Residues R108, H136, and Q139 each coordinate carbamoyl phosphate. R169 and R224 together coordinate L-aspartate. Residues G265 and P266 each coordinate carbamoyl phosphate.

Belongs to the aspartate/ornithine carbamoyltransferase superfamily. ATCase family. Heterododecamer (2C3:3R2) of six catalytic PyrB chains organized as two trimers (C3), and six regulatory PyrI chains organized as three dimers (R2).

It carries out the reaction carbamoyl phosphate + L-aspartate = N-carbamoyl-L-aspartate + phosphate + H(+). The protein operates within pyrimidine metabolism; UMP biosynthesis via de novo pathway; (S)-dihydroorotate from bicarbonate: step 2/3. In terms of biological role, catalyzes the condensation of carbamoyl phosphate and aspartate to form carbamoyl aspartate and inorganic phosphate, the committed step in the de novo pyrimidine nucleotide biosynthesis pathway. This chain is Aspartate carbamoyltransferase catalytic subunit, found in Geobacter sp. (strain M21).